A 152-amino-acid polypeptide reads, in one-letter code: Superoxide dismutase [Cu-Zn] 1 (152 aa).

The Cu cation site is built by His45, His47, and His62. A disulfide bond links Cys56 and Cys145. Residues His62, His70, His79, and Asp82 each coordinate Zn(2+). His119 contributes to the Cu cation binding site.

It belongs to the Cu-Zn superoxide dismutase family. As to quaternary structure, homodimer. Cu cation serves as cofactor. Zn(2+) is required as a cofactor.

The protein resides in the cytoplasm. The enzyme catalyses 2 superoxide + 2 H(+) = H2O2 + O2. Destroys radicals which are normally produced within the cells and which are toxic to biological systems. This chain is Superoxide dismutase [Cu-Zn] 1 (SODCC.1), found in Mesembryanthemum crystallinum (Common ice plant).